The chain runs to 100 residues: Small ribosomal subunit protein bS6 (100 aa).

It belongs to the bacterial ribosomal protein bS6 family.

Functionally, binds together with bS18 to 16S ribosomal RNA. The chain is Small ribosomal subunit protein bS6 from Enterococcus faecalis (strain ATCC 700802 / V583).